Here is a 311-residue protein sequence, read N- to C-terminus: Taste receptor type 2 member 9 (311 aa).

Over 1–9 (MPSTIEAIY) the chain is Extracellular. Residues 10–32 (IILIAGELTIGIWGNGFIVLVNC) form a helical membrane-spanning segment. The Cytoplasmic segment spans residues 33–52 (IDWLKRRDVSLIDIILISLA). Residues 53-72 (ISRICLLCVISLDGFFILLF) form a helical membrane-spanning segment. Over 73–86 (PGTYDINVLESIMD) the chain is Extracellular. The chain crosses the membrane as a helical span at residues 87 to 109 (AVWTFANNSSLWFTSCLSIFYLL). Residues 110–128 (KIANISHPFFFWLKLKINK) are Cytoplasmic-facing. The helical transmembrane segment at 129-146 (VILAILLGSFLISLIISF) threads the bilayer. Residues 147-179 (PINGXWYHLFKVSHEENITWAFKVSTIPGAFKQ) lie on the Extracellular side of the membrane. An N-linked (GlcNAc...) asparagine glycan is attached at asparagine 163. Residues 180-202 (LTLNLGAMVPFMLCLISFFLLLF) traverse the membrane as a helical segment. Residues 203-233 (SLVRHTKQIQLHATGLRDPSTEAHMRAIKAV) lie on the Cytoplasmic side of the membrane. Residues 234–256 (IIFLLLLIVYYPVFLVMTSSTLI) form a helical membrane-spanning segment. The Extracellular portion of the chain corresponds to 257 to 260 (PQGK). Residues 261-283 (LVLMIGDIVTVIFPSSHSFILIM) traverse the membrane as a helical segment. Residues 284–311 (GNSKLREAFLKMLRFVKGFLRRRKPFGP) lie on the Cytoplasmic side of the membrane.

Belongs to the G-protein coupled receptor T2R family.

Its subcellular location is the membrane. Gustducin-coupled receptor implicated in the perception of bitter compounds in the oral cavity and the gastrointestinal tract. Signals through PLCB2 and the calcium-regulated cation channel TRPM5. The protein is Taste receptor type 2 member 9 (TAS2R9) of Papio hamadryas (Hamadryas baboon).